The sequence spans 832 residues: Protein monoglycylase TTLL8 (832 aa).

The segment covering 1–13 (MSCPPTPNPPFRP) has biased composition (pro residues). 2 disordered regions span residues 1 to 84 (MSCP…QDLS) and 277 to 304 (GKSK…KLPS). 3 stretches are compositionally biased toward basic and acidic residues: residues 46–59 (QLRE…ERKK), 66–75 (DGDHKEENKL), and 280–299 (KKEE…ENPD). Residues 271–624 (YCSKVKGKSK…RKLDRNCDIG (354 aa)) enclose the TTL domain. ATP is bound by residues lysine 397, 403-404 (RG), 435-438 (QKYI), 448-450 (KFD), and 492-493 (CN). An a protein-binding site is contributed by arginine 403. Serine 495 contacts L-glutamate. Mg(2+)-binding residues include aspartate 570, glutamate 583, and asparagine 585. Glutamate 583 contacts ATP.

The cofactor is Mg(2+). Highly expressed in testis. Expressed in brain, heart, kidney, liver, lung, muscle, spleen and trachea. Expressed in sperm flagellum. In the brain, specifically expressed in ependymal cilia.

The protein localises to the cytoplasm. The protein resides in the cytoskeleton. Its subcellular location is the cell projection. It is found in the cilium. It localises to the cilium axoneme. The protein localises to the flagellum axoneme. The catalysed reaction is L-glutamyl-[protein] + glycine + ATP = glycyl-L-glutamyl-[protein] + ADP + phosphate + H(+). In terms of biological role, monoglycylase which modifies both tubulin and non-tubulin proteins, adding a single glycine on the gamma-carboxyl groups of specific glutamate residues to generate monoglycine side chains within the C-terminal tail of target proteins. Not involved in elongation step of the polyglycylation reaction. Preferentially monoglycylates alpha-tubulin over beta-tubulin. Together with TTLL3, mediates microtubule glycylation of primary and motile cilia, which is essential for their stability and maintenance. Together with TTLL3, glycylates sperm flagella which regulates axonemal dynein motor activity, thereby controlling flagellar beat, directional sperm swimming and male fertility. Monoglycylates non-tubulin proteins such as ANP32A, ANP32B, SET, NCL and NAP1. The sequence is that of Protein monoglycylase TTLL8 from Mus musculus (Mouse).